The sequence spans 216 residues: Cytochrome c biogenesis ATP-binding export protein CcmA (216 aa).

Residues 2–215 (LSVEELSCVR…SNHLRKIKLG (214 aa)) form the ABC transporter domain. 34–41 (GHNGAGKT) contributes to the ATP binding site.

Belongs to the ABC transporter superfamily. CcmA exporter (TC 3.A.1.107) family. In terms of assembly, the complex is composed of two ATP-binding proteins (CcmA) and two transmembrane proteins (CcmB).

The protein resides in the cell inner membrane. The catalysed reaction is heme b(in) + ATP + H2O = heme b(out) + ADP + phosphate + H(+). Part of the ABC transporter complex CcmAB involved in the biogenesis of c-type cytochromes; once thought to export heme, this seems not to be the case, but its exact role is uncertain. Responsible for energy coupling to the transport system. The polypeptide is Cytochrome c biogenesis ATP-binding export protein CcmA (Photobacterium profundum (strain SS9)).